The primary structure comprises 361 residues: MKAATAYINLEALQHNLQRVKQQAPESKIMAVVKANGYGHGLRHIARHALGADAFGVARIEEALQLRASGVVKPILLLEGFYSPGDLPVLVTNNIQTVVHCEEQLQALEQAQLETPVMVWLKVDSGMHRLGVRPEQYQDFVARLHQCENVAKPLRYMSHFGCADELDKSTTVEQTELFLSLTQGCQGERSLAASAGLLAWPQSQLEWVRPGIIMYGVSPFVEKSAVQLGYQPVMTLKSHLIAVREVKAGESVGYGGTWTSQRDTKIGVIAIGYGDGYPRTAPNGTPVVVNGRRVPIAGRVSMDMLTVDLGPDACDRVGDEAMLWGNELPVEEVAAHIGTIGYELVTKLTSRVEMSYYGAGV.

The active-site Proton acceptor; specific for D-alanine is the Lys-34. Position 34 is an N6-(pyridoxal phosphate)lysine (Lys-34). A substrate-binding site is contributed by Arg-129. Residue Tyr-254 is the Proton acceptor; specific for L-alanine of the active site. Met-302 contributes to the substrate binding site.

The protein belongs to the alanine racemase family. Requires pyridoxal 5'-phosphate as cofactor.

The enzyme catalyses L-alanine = D-alanine. It carries out the reaction L-serine = D-serine. The protein operates within amino-acid biosynthesis; D-alanine biosynthesis; D-alanine from L-alanine: step 1/1. Its function is as follows. Catalyzes the interconversion of L-alanine and D-alanine. Likely plays an important role in supplying D-alanine, which is an indispensable constituent in the biosynthesis of bacterial cell-wall peptidoglycan. To a lesser extent, is also able to racemize L-serine and D-serine. Does not act on other proteinogenic amino-acids. This Vibrio cholerae serotype O1 (strain ATCC 39315 / El Tor Inaba N16961) protein is Alanine racemase (alr1).